A 482-amino-acid polypeptide reads, in one-letter code: tRNA sulfurtransferase (482 aa).

The region spanning Leu61–Arg165 is the THUMP domain. ATP contacts are provided by residues Leu183–Ile184, Lys265, Gly287, and Gln296. An intrachain disulfide couples Cys344 to Cys456. A Rhodanese domain is found at Phe404 to Pro482. Cys456 serves as the catalytic Cysteine persulfide intermediate.

This sequence belongs to the ThiI family.

It localises to the cytoplasm. It catalyses the reaction [ThiI sulfur-carrier protein]-S-sulfanyl-L-cysteine + a uridine in tRNA + 2 reduced [2Fe-2S]-[ferredoxin] + ATP + H(+) = [ThiI sulfur-carrier protein]-L-cysteine + a 4-thiouridine in tRNA + 2 oxidized [2Fe-2S]-[ferredoxin] + AMP + diphosphate. The enzyme catalyses [ThiS sulfur-carrier protein]-C-terminal Gly-Gly-AMP + S-sulfanyl-L-cysteinyl-[cysteine desulfurase] + AH2 = [ThiS sulfur-carrier protein]-C-terminal-Gly-aminoethanethioate + L-cysteinyl-[cysteine desulfurase] + A + AMP + 2 H(+). The protein operates within cofactor biosynthesis; thiamine diphosphate biosynthesis. Catalyzes the ATP-dependent transfer of a sulfur to tRNA to produce 4-thiouridine in position 8 of tRNAs, which functions as a near-UV photosensor. Also catalyzes the transfer of sulfur to the sulfur carrier protein ThiS, forming ThiS-thiocarboxylate. This is a step in the synthesis of thiazole, in the thiamine biosynthesis pathway. The sulfur is donated as persulfide by IscS. This is tRNA sulfurtransferase from Escherichia fergusonii (strain ATCC 35469 / DSM 13698 / CCUG 18766 / IAM 14443 / JCM 21226 / LMG 7866 / NBRC 102419 / NCTC 12128 / CDC 0568-73).